A 427-amino-acid chain; its full sequence is Tol-Pal system protein TolB (427 aa).

An N-terminal signal peptide occupies residues 1-23 (MKLLKRLVSVFAIVLAVGSNAFA).

It belongs to the TolB family. In terms of assembly, the Tol-Pal system is composed of five core proteins: the inner membrane proteins TolA, TolQ and TolR, the periplasmic protein TolB and the outer membrane protein Pal. They form a network linking the inner and outer membranes and the peptidoglycan layer.

Its subcellular location is the periplasm. Part of the Tol-Pal system, which plays a role in outer membrane invagination during cell division and is important for maintaining outer membrane integrity. The chain is Tol-Pal system protein TolB from Haemophilus influenzae (strain PittEE).